Reading from the N-terminus, the 202-residue chain is FMN-dependent NADH:quinone oxidoreductase (202 aa).

FMN is bound by residues serine 10, 16 to 18 (SHS), and 96 to 99 (MYNF).

It belongs to the azoreductase type 1 family. In terms of assembly, homodimer. FMN is required as a cofactor.

The catalysed reaction is 2 a quinone + NADH + H(+) = 2 a 1,4-benzosemiquinone + NAD(+). The enzyme catalyses N,N-dimethyl-1,4-phenylenediamine + anthranilate + 2 NAD(+) = 2-(4-dimethylaminophenyl)diazenylbenzoate + 2 NADH + 2 H(+). Quinone reductase that provides resistance to thiol-specific stress caused by electrophilic quinones. Functionally, also exhibits azoreductase activity. Catalyzes the reductive cleavage of the azo bond in aromatic azo compounds to the corresponding amines. In Hydrogenovibrio crunogenus (strain DSM 25203 / XCL-2) (Thiomicrospira crunogena), this protein is FMN-dependent NADH:quinone oxidoreductase.